A 1145-amino-acid polypeptide reads, in one-letter code: Structure-specific endonuclease subunit SLX4 (1145 aa).

The interval 48–108 is disordered; sequence ADIPVQPDPP…GKSKQQPSIS (61 aa). Residues 321–372 are a coiled coil; the sequence is ERETQKCRQLRQQHELVYAELERYYGDPQKLEEEVMQELDELEKLVADNMIE. Residues 382–393 are compositionally biased toward low complexity; that stretch reads EAESSSTGSSPS. Disordered stretches follow at residues 382-442, 613-634, and 666-689; these read EAES…EDEP, QSSHQLGILTTPNDTEHSSSFS, and SAEKRVSPAASPYKQSDASVDLTQ. The segment covering 395 to 410 has biased composition (basic and acidic residues); the sequence is EPPDKRPKMTMEDKEN. 3 stretches are compositionally biased toward polar residues: residues 411-430, 613-633, and 678-689; these read LQPTTSKASLTVPAQSTRCT, QSSHQLGILTTPNDTEHSSSF, and YKQSDASVDLTQ.

Belongs to the SLX4 family. Forms a heterodimer with SLX1. Interacts with mei-9; catalytic subunit of the MEI-9-ERCC1 endonuclease.

It is found in the nucleus. Functionally, regulatory subunit that interacts with and increases the activity of different structure-specific endonucleases. Has several distinct roles in protecting genome stability by resolving diverse forms of deleterious DNA structures originating from replication and recombination intermediates and from DNA damage. Component of the SLX1-SLX4 structure-specific endonuclease that resolves DNA secondary structures generated during DNA repair and recombination. Has endonuclease activity towards branched DNA substrates, introducing single-strand cuts in duplex DNA close to junctions with ss-DNA. Interacts with the structure-specific MEI-9-ERCC1 endonuclease to generate meiotic crossovers. In Drosophila melanogaster (Fruit fly), this protein is Structure-specific endonuclease subunit SLX4 (mus312).